Here is a 311-residue protein sequence, read N- to C-terminus: MSKLLVFGHQNPDTDAIASSYAFDYLAKKAFDLDTEVVALGDPNEETAFALDYFGVSAPRVVTSAKAEGASHVILTDHNEFPQSISDIREVEVYGIVDHHRVANFETANPLYMRVEPVGSASSIVYRLFKENRVDVPKDIAGMLLSGLISDTLLLKSPTTHASDHRVAAELAELAGVKLEEYGMAMLKAGTNLASKSEAELIDIDAKTFELNGNAVRVAQVNTVDIAEVLERKEAIEAAIREVMASEGYSDFVLMITDIVNSNSEILALGANMDKVEAAFSFKLEDNHAFLAGAVSRKKQVVPQLTESFGA.

The Mn(2+) site is built by His-9, Asp-13, Asp-15, Asp-77, His-99, and Asp-151.

Belongs to the PPase class C family. The cofactor is Mn(2+).

Its subcellular location is the cytoplasm. The enzyme catalyses diphosphate + H2O = 2 phosphate + H(+). The sequence is that of Probable manganese-dependent inorganic pyrophosphatase from Streptococcus equi subsp. equi (strain 4047).